Here is a 95-residue protein sequence, read N- to C-terminus: MKIEVIKKEEDMLEFYLEGEDHTFANLLTEVLREDPHVKFVAYTIEHPITMARKPRFRVVTDGKVTPEKALEEAARKIFNRAKEVLDAWEKVVKS.

Belongs to the archaeal Rpo11/eukaryotic RPB11/RPC19 RNA polymerase subunit family. Part of the RNA polymerase complex.

It localises to the cytoplasm. The enzyme catalyses RNA(n) + a ribonucleoside 5'-triphosphate = RNA(n+1) + diphosphate. Its function is as follows. DNA-dependent RNA polymerase (RNAP) catalyzes the transcription of DNA into RNA using the four ribonucleoside triphosphates as substrates. This is DNA-directed RNA polymerase subunit Rpo11 from Pyrococcus horikoshii (strain ATCC 700860 / DSM 12428 / JCM 9974 / NBRC 100139 / OT-3).